The primary structure comprises 530 residues: Autoinducer-2 kinase (530 aa).

The protein belongs to the FGGY kinase family.

It is found in the cytoplasm. It catalyses the reaction (S)-4,5-dihydroxypentane-2,3-dione + ATP = (2S)-2-hydroxy-3,4-dioxopentyl phosphate + ADP + H(+). In terms of biological role, catalyzes the phosphorylation of autoinducer-2 (AI-2) to phospho-AI-2, which subsequently inactivates the transcriptional regulator LsrR and leads to the transcription of the lsr operon. Phosphorylates the ring-open form of (S)-4,5-dihydroxypentane-2,3-dione (DPD), which is the precursor to all AI-2 signaling molecules, at the C5 position. The protein is Autoinducer-2 kinase of Escherichia coli (strain ATCC 8739 / DSM 1576 / NBRC 3972 / NCIMB 8545 / WDCM 00012 / Crooks).